The primary structure comprises 448 residues: MKKINLDYSKVFNFISQDELNQIKVSIDKVAEKLHNKSGAGNNFLGWLDLPINYDKEEFSRIKKASEKIKADSDVLIVIGIGGSYLGARAVIECLSHSFFNSLNKEKRNAPEIYFAGQNISGRYLKDLIEIIGDRDFSVNIISKSGTTTEPAIAFRVFKELLENKYGEKAKDRIYVTTDKNKGALKKLADEKGYEKFVIPDDVGGRFSVLTAVGLLPIAVAGINIDALMNGAQIAREDYSKDFADNDCYKYAAIRNILYKKNYNIEILANYEPKFHYISEWWKQLYGESEGKDKKGIFPASVDLTTDLHSMGQYIQDGRRNLMETILNVENSDKDIVIKKEVEDLDGLNYLEGKGLSFVNNKAFEGTLLAHIDGGVPNLVINIPEVTAFNIGYLIYFFEKACAISGYLLEVNPFDQPGVESYKKNMFALLGKKGYEELSKELNERLKK.

Glu288 functions as the Proton donor in the catalytic mechanism. Catalysis depends on residues His309 and Lys423.

Belongs to the GPI family.

The protein localises to the cytoplasm. It carries out the reaction alpha-D-glucose 6-phosphate = beta-D-fructose 6-phosphate. It participates in carbohydrate biosynthesis; gluconeogenesis. It functions in the pathway carbohydrate degradation; glycolysis; D-glyceraldehyde 3-phosphate and glycerone phosphate from D-glucose: step 2/4. Catalyzes the reversible isomerization of glucose-6-phosphate to fructose-6-phosphate. This chain is Glucose-6-phosphate isomerase, found in Fusobacterium nucleatum subsp. nucleatum (strain ATCC 25586 / DSM 15643 / BCRC 10681 / CIP 101130 / JCM 8532 / KCTC 2640 / LMG 13131 / VPI 4355).